We begin with the raw amino-acid sequence, 342 residues long: Putative glycosyltransferases (342 aa).

2 consecutive transmembrane segments (helical) span residues 227–247 (IFYL…YLII) and 262–282 (VIVS…LVGI).

Belongs to the glycosyltransferase 2 family.

It is found in the cell membrane. Its function is as follows. May play only a redundant role in maintaining cell wall viability and bacterial virulence. The protein is Putative glycosyltransferases (pimF) of Mycobacterium tuberculosis (strain CDC 1551 / Oshkosh).